Here is a 525-residue protein sequence, read N- to C-terminus: Erythropoietin receptor (525 aa).

An N-terminal signal peptide occupies residues 1–32 (MGAPSSLLFSTAHWRTVPFLLAFWVLLSTGTA). Residues 33-249 (EDPTMTPEFL…TIATIIDLRL (217 aa)) lie on the Extracellular side of the membrane. Residues C58 and C68 are joined by a disulfide bond. N77, N100, N149, and N185 each carry an N-linked (GlcNAc...) asparagine glycan. The cysteines at positions 91 and 107 are disulfide-linked. The Fibronectin type-III domain maps to 146–246 (PPLNVTVKEK…APITIATIID (101 aa)). Positions 232-236 (WSDWT) match the WSXWS motif motif. The chain crosses the membrane as a helical span at residues 250 to 270 (LLLLSIAIFVALIAGVGVYIF). Over 271–525 (MRHGMYLKHK…NFLAPIYSQS (255 aa)) the chain is Cytoplasmic. A Box 1 motif motif is present at residues 281–289 (VWPQVPTPE). Disordered stretches follow at residues 434-459 (APRM…QSIP) and 492-513 (LDMS…QNSP). Residues 447 to 459 (ENSVSSDGKQSIP) are compositionally biased toward polar residues. The ITIM motif signature appears at 487-492 (LKYAYL).

It belongs to the type I cytokine receptor family. Type 1 subfamily. Expressed in the ventral blood island from stage 28 through to stage 36. Expressed in the circulating blood by stage 40. In the adult, highly expressed in peripheral blood cells including immature erythrocytes and basophils, and moderately expressed in the hematopoietic organs: liver, kidney and spleen. Expressed at a low level in adult brain.

It is found in the cell membrane. Functionally, receptor for erythropoietin. Mediates erythropoietin-induced erythroblast proliferation and differentiation. This chain is Erythropoietin receptor, found in Xenopus laevis (African clawed frog).